The sequence spans 181 residues: Isopentenyl-diphosphate Delta-isomerase (181 aa).

His-25 and His-32 together coordinate Mn(2+). The 135-residue stretch at 30–164 (PLHLAFSCWL…PWAFSPWMVM (135 aa)) folds into the Nudix hydrolase domain. Cys-67 is an active-site residue. A Mg(2+)-binding site is contributed by Cys-67. Residue His-69 coordinates Mn(2+). Residue Glu-87 coordinates Mg(2+). Mn(2+)-binding residues include Glu-114 and Glu-116. Residue Glu-116 is part of the active site.

It belongs to the IPP isomerase type 1 family. As to quaternary structure, homodimer. Requires Mg(2+) as cofactor. The cofactor is Mn(2+).

It is found in the cytoplasm. The catalysed reaction is isopentenyl diphosphate = dimethylallyl diphosphate. It participates in isoprenoid biosynthesis; dimethylallyl diphosphate biosynthesis; dimethylallyl diphosphate from isopentenyl diphosphate: step 1/1. Catalyzes the 1,3-allylic rearrangement of the homoallylic substrate isopentenyl (IPP) to its highly electrophilic allylic isomer, dimethylallyl diphosphate (DMAPP). The sequence is that of Isopentenyl-diphosphate Delta-isomerase from Salmonella typhi.